We begin with the raw amino-acid sequence, 220 residues long: Putative 3-methyladenine DNA glycosylase (220 aa).

This sequence belongs to the DNA glycosylase MPG family.

This chain is Putative 3-methyladenine DNA glycosylase, found in Rickettsia bellii (strain RML369-C).